A 210-amino-acid chain; its full sequence is Pyridoxine/pyridoxamine 5'-phosphate oxidase (210 aa).

Residues 7–10 (RQSY) and lysine 65 each bind substrate. FMN-binding positions include 60–65 (RIVLIK), 75–76 (FT), arginine 81, lysine 82, and glutamine 104. Residues tyrosine 122, arginine 126, and serine 130 each contribute to the substrate site. Residues 139 to 140 (QS) and tryptophan 182 contribute to the FMN site. Residue 188–190 (RLH) coordinates substrate. Arginine 192 lines the FMN pocket.

It belongs to the pyridoxamine 5'-phosphate oxidase family. As to quaternary structure, homodimer. Requires FMN as cofactor.

The enzyme catalyses pyridoxamine 5'-phosphate + O2 + H2O = pyridoxal 5'-phosphate + H2O2 + NH4(+). It catalyses the reaction pyridoxine 5'-phosphate + O2 = pyridoxal 5'-phosphate + H2O2. The protein operates within cofactor metabolism; pyridoxal 5'-phosphate salvage; pyridoxal 5'-phosphate from pyridoxamine 5'-phosphate: step 1/1. It functions in the pathway cofactor metabolism; pyridoxal 5'-phosphate salvage; pyridoxal 5'-phosphate from pyridoxine 5'-phosphate: step 1/1. Catalyzes the oxidation of either pyridoxine 5'-phosphate (PNP) or pyridoxamine 5'-phosphate (PMP) into pyridoxal 5'-phosphate (PLP). The chain is Pyridoxine/pyridoxamine 5'-phosphate oxidase from Bordetella avium (strain 197N).